Reading from the N-terminus, the 1162-residue chain is Protein OBERON 4 (1162 aa).

Basic and acidic residues-rich tracts occupy residues 1–19 (MKRLRSSDDLDFCNDKNVD), 61–77 (NRDLDNHRPDARYHRSE), 90–99 (FRSERERPNR), and 118–134 (VDDRDRRLRDAERDRSL). Disordered stretches follow at residues 1 to 235 (MKRL…PSCS), 251 to 307 (IGKS…VSQN), 321 to 346 (DHRDGTITASANKITDTVDEKGDKDE), and 441 to 485 (SKTE…QSGV). A compositionally biased stretch (polar residues) spans 135-146 (KSPSWSRDSPNE). Basic and acidic residues predominate over residues 148-157 (SKFKPLDSRN). The segment covering 163 to 182 (KSLASPTWSKDSGSEQSKSV) has biased composition (polar residues). Acidic residues predominate over residues 203-213 (EMEEGELEPEP). 4 stretches are compositionally biased toward basic and acidic residues: residues 225 to 235 (TKHDCKLPSCS), 263 to 300 (SNRELSHVGGNREMETTDSMTDKKSVEDAENVPEHATE), 336 to 346 (DTVDEKGDKDE), and 441 to 457 (SKTEDLHDKDKDEKDDN). The segment at 835–899 (ACMCLVCSNF…QFHCVACNHP (65 aa)) adopts a PHD-type zinc-finger fold. Positions 1065–1161 (MKQAEAEMFQ…KMEMTKQSLA (97 aa)) form a coiled coil.

In terms of assembly, self-interacts. Interacts with OBE1 and OBE2. Interacts with OBE3.

Its subcellular location is the nucleus. Its function is as follows. Probable transcription factor that functions redundantly with OBE3 in specification of the hypophysis and establishment of the embryonic root. Involved in the activation of ARF5/MP-dependent gene expression during embryonic root meristem initiation. Involved in shoot meristem homeostasis. This chain is Protein OBERON 4, found in Arabidopsis thaliana (Mouse-ear cress).